Here is a 404-residue protein sequence, read N- to C-terminus: Argininosuccinate synthase (404 aa).

Residues 10-18 and Ala38 each bind ATP; that span reads AYSGGVDTS. Tyr89 serves as a coordination point for L-citrulline. Gly119 contacts ATP. Residues Thr121, Asn125, and Asp126 each contribute to the L-aspartate site. Asn125 contributes to the L-citrulline binding site. L-citrulline is bound by residues Arg129, Ser177, Ser186, Glu262, and Tyr274.

It belongs to the argininosuccinate synthase family. Type 1 subfamily. Homotetramer.

The protein resides in the cytoplasm. It catalyses the reaction L-citrulline + L-aspartate + ATP = 2-(N(omega)-L-arginino)succinate + AMP + diphosphate + H(+). The protein operates within amino-acid biosynthesis; L-arginine biosynthesis; L-arginine from L-ornithine and carbamoyl phosphate: step 2/3. The protein is Argininosuccinate synthase of Prochlorococcus marinus (strain AS9601).